Here is a 457-residue protein sequence, read N- to C-terminus: MRTTGLLLLGALAELGSATYILEDDYQPNTWFDQFRFFSAKDPTHAYVNYLDQAEARSQNLIGVRNNAVYLGVDHKNVATGEGRSSVRLETKKVYNHGLIVADINHMPGGECGTWPAFWTTSSAWPMEGELDIIEGVNQQKQNDYALHTAQGCSIPERGDFTGSVVTPNCDVKALGQAENQGCLVEDTKGSRGYGPDFNNATGGVFATEWTDQAISIWFFPREDIPKDVNSEHPDPSKWGKPSAFFGGGECPIGKHVRNQRIIFNTAFCGGWADGMWPGDPICSKKAPTCMEYVRENPSAFEDAYWSINYMKVYQQGTAPTKPSQAPAPPSSTPALPTMKSTSTVSSMVSATQPAPTASNPTGAPMQPSSSSSNNGPQPTGGNGNPGDSCPPPTQPACRTYVTTKTYTLVSTMMPSGPQTTGGIVPVPSAALEDIKDTAQRLRRRDMERHSRRGHHN.

The first 18 residues, 1-18, serve as a signal peptide directing secretion; that stretch reads MRTTGLLLLGALAELGSA. One can recognise a GH16 domain in the interval 19–319; the sequence is TYILEDDYQP…YMKVYQQGTA (301 aa). The Nucleophile role is filled by Glu-130. Glu-135 serves as the catalytic Proton donor. An N-linked (GlcNAc...) asparagine glycan is attached at Asn-200. The interval 318-397 is disordered; sequence TAPTKPSQAP…DSCPPPTQPA (80 aa). A compositionally biased stretch (low complexity) spans 333–352; that stretch reads TPALPTMKSTSTVSSMVSAT. Positions 353–362 are enriched in polar residues; that stretch reads QPAPTASNPT. Positions 368–378 are enriched in low complexity; that stretch reads PSSSSSNNGPQ.

Belongs to the glycosyl hydrolase 16 family.

It is found in the secreted. It catalyses the reaction Endohydrolysis of (1-&gt;3)- or (1-&gt;4)-linkages in beta-D-glucans when the glucose residue whose reducing group is involved in the linkage to be hydrolyzed is itself substituted at C-3.. Functionally, mixed-linked glucanase involved in the degradation of complex natural cellulosic substrates. Active on laminarin. lichenan, soluble carboxymethyl cellulose but not on pustulan. The chain is Endo-1,3(4)-beta-glucanase ARB_04519 from Arthroderma benhamiae (strain ATCC MYA-4681 / CBS 112371) (Trichophyton mentagrophytes).